The primary structure comprises 2758 residues: Highly reducing polyketide synthase NEC1 (2758 aa).

Residues 153–492 enclose the Ketosynthase family 3 (KS3) domain; that stretch reads EASSPIIGLD…GSNAHVVMDD (340 aa). Residues 512-576 form a disordered region; that stretch reads PRLPGSSSSR…NTDTLQTTDT (65 aa). A compositionally biased stretch (low complexity) spans 566-576; it reads TNTDTLQTTDT. Positions 700–1044 are malonyl-CoA:ACP transacylase (MAT) domain; the sequence is VFTGQGAQWP…GYATVLKRGD (345 aa). The active-site For malonyltransferase activity is serine 790. The N-terminal hotdog fold stretch occupies residues 1124-1255; it reads HELLGAPVPD…GFVRTEYSQT (132 aa). Residues 1124–1442 are dehydratase (DH) domain; sequence HELLGAPVPD…VFKTIPNTAS (319 aa). The region spanning 1124–1443 is the PKS/mFAS DH domain; sequence HELLGAPVPD…FKTIPNTASS (320 aa). Residue histidine 1156 is the Proton acceptor; for dehydratase activity of the active site. The interval 1283–1443 is C-terminal hotdog fold; that stretch reads TSMVHADKVY…FKTIPNTASS (161 aa). The active-site Proton donor; for dehydratase activity is the aspartate 1351. The interval 1622–1727 is methyltransferase (CMet) domain; it reads LEVGGGTGGA…RKLLKPGGKL (106 aa). The tract at residues 2031–2344 is enoyl reductase (ER) domain; that stretch reads GTADVCFSED…LGKGEDAVVL (314 aa). The segment at 2372–2553 is ketoreductase (KR) domain; sequence ASYMVVGGLG…PVAVSLDLPV (182 aa). The Carrier domain occupies 2673–2750; sequence EAQAVVLDAL…ALAAAVAGRS (78 aa). Position 2710 is an O-(pantetheine 4'-phosphoryl)serine (serine 2710).

Highly reducing polyketide synthase; part of the gene cluster that mediates the biosynthesis of nectriapyrone and its analogs phomopyrone A, acropyrone and zaepyrone. The nectriapyrone biosynthetic gene cluster consists of two genes, the highly reducing polyketide synthase NEC1 that produces a demethylated analog of nectriapyrone from one unit of acetyl-CoA and one unit of malonyl-CoA; and the O-methyltransferase NEC2 that further methylates the NEC1 product to yield nectriapyrone. Nectriapyrone is further hydrolyzed to nectriapyrone D, also known as gulypyrone B, by an unidentified hydrolase localized outside the nectriapyrone cluster. This Pyricularia oryzae (strain 70-15 / ATCC MYA-4617 / FGSC 8958) (Rice blast fungus) protein is Highly reducing polyketide synthase NEC1.